A 466-amino-acid chain; its full sequence is Phytase A (466 aa).

The signal sequence occupies residues 1–19; sequence MGFLAIVLSVALLFRSTSG. The cysteines at positions 31 and 40 are disulfide-linked. Residues tyrosine 51, arginine 81, histidine 82, arginine 85, and threonine 88 each coordinate 1D-myo-inositol hexakisphosphate. 4 cysteine pairs are disulfide-bonded: cysteine 71/cysteine 414, cysteine 215/cysteine 465, cysteine 264/cysteine 282, and cysteine 436/cysteine 444. The active-site Nucleophile is histidine 82. The N-linked (GlcNAc...) asparagine glycan is linked to asparagine 120. Arginine 165 contacts 1D-myo-inositol hexakisphosphate. 2 N-linked (GlcNAc...) asparagine glycosylation sites follow: asparagine 207 and asparagine 230. Lysine 301 serves as a coordination point for 1D-myo-inositol hexakisphosphate. N-linked (GlcNAc...) asparagine glycosylation is found at asparagine 339 and asparagine 352. 1D-myo-inositol hexakisphosphate-binding residues include histidine 361 and aspartate 362. Asparagine 376 carries an N-linked (GlcNAc...) asparagine glycan.

It belongs to the histidine acid phosphatase family. Monomer.

The protein resides in the secreted. The catalysed reaction is 1D-myo-inositol hexakisphosphate + H2O = 1D-myo-inositol 1,2,4,5,6-pentakisphosphate + phosphate. The enzyme catalyses 1D-myo-inositol 1,2,4,5,6-pentakisphosphate + H2O = 1D-myo-inositol 1,2,5,6-tetrakisphosphate + phosphate. It catalyses the reaction 1D-myo-inositol 1,2,5,6-tetrakisphosphate + H2O = 1D-myo-inositol 1,2,6-trisphosphate + phosphate. It carries out the reaction 1D-myo-inositol 1,2,6-trisphosphate + H2O = 1D-myo-inositol 1,2-bisphosphate + phosphate. The catalysed reaction is 1D-myo-inositol 1,2-bisphosphate + H2O = 1D-myo-inositol 2-phosphate + phosphate. Catalyzes the phosphate monoester hydrolysis of phytic acid (myo-inositol hexakisphosphate), which results in the stepwise formation of myo-inositol pentakis-, tetrakis-, tris-, bis-, and monophosphates, as well as the liberation of inorganic phosphate. Myo-inositol 2-monophosphate is the end product. Has a broad substrate specificity and is also able to dephosphorylate other classic acid phosphatase substrates such as p-nitrophenyl phosphate, phenyl phosphate, fructose 1,6-bisphosphate, glucose 6-phosphate, 3-phosphoglycerate, as well as ADP and ATP. This is Phytase A from Aspergillus terreus.